Here is a 205-residue protein sequence, read N- to C-terminus: MDLKQKYIFIEGTNCPVTVRGRLLQVFRRSVSGELFKGLWLVLREMLRFNIHTTQYPKEKLPLSPRYRAIHELLRLLESGNERCIGCGLCEKICISNCIRMETSYGEDGRKKVHEYTINFGRCIFCGFCAEVCPELAIVHGGRYENASEQRAHFGLKEDMLTPMERFMNQGQKEFPGFGALSQDADSKVKKTPLAYFTPKGEENV.

2 4Fe-4S ferredoxin-type domains span residues R75–S104 and H114–R143. [4Fe-4S] cluster contacts are provided by C84, C87, C90, C94, C123, C126, C129, and C133.

Belongs to the complex I 23 kDa subunit family. In terms of assembly, NDH-1 is composed of 14 different subunits. Subunits NuoA, H, J, K, L, M, N constitute the membrane sector of the complex. The cofactor is [4Fe-4S] cluster.

It localises to the cell inner membrane. The catalysed reaction is a quinone + NADH + 5 H(+)(in) = a quinol + NAD(+) + 4 H(+)(out). Functionally, NDH-1 shuttles electrons from NADH, via FMN and iron-sulfur (Fe-S) centers, to quinones in the respiratory chain. The immediate electron acceptor for the enzyme in this species is believed to be ubiquinone. Couples the redox reaction to proton translocation (for every two electrons transferred, four hydrogen ions are translocated across the cytoplasmic membrane), and thus conserves the redox energy in a proton gradient. This chain is NADH-quinone oxidoreductase subunit I, found in Wolinella succinogenes (strain ATCC 29543 / DSM 1740 / CCUG 13145 / JCM 31913 / LMG 7466 / NCTC 11488 / FDC 602W) (Vibrio succinogenes).